Reading from the N-terminus, the 252-residue chain is MTREKSLALLITLAAALAAAESPPGRCHSPKTVGPCRASFHRWRYNATSQMCQEFIFGGCKGNANNFVSKQDCFQTCIRGGAAEATVVPSGPATEVATPRAGHLPEAYENRPGFREFCAAPRVVGPCRASFLRWYFDLESRMCKMFIYGGCRGNKNNYLFEEHCWSQCTGDGEITEEPGDAGAQPPLPSEPFSFSTRAVVLAVLPAILVTILLGSMGVFFVKICRKNPELSVGTVWSTLDDKEYLMSNAYTL.

The first 20 residues, Met-1 to Ala-20, serve as a signal peptide directing secretion. 2 consecutive BPTI/Kunitz inhibitor domains span residues Cys-27–Cys-77 and Cys-118–Cys-168. 6 disulfide bridges follow: Cys-27–Cys-77, Cys-36–Cys-60, Cys-52–Cys-73, Cys-118–Cys-168, Cys-127–Cys-151, and Cys-143–Cys-164. A glycan (N-linked (GlcNAc...) asparagine) is linked at Asn-46.

This sequence belongs to the venom Kunitz-type family. In terms of tissue distribution, expressed by the venom gland.

It localises to the secreted. Its function is as follows. Serine protease inhibitor. The sequence is that of Putative Kunitz-type serine protease inhibitor from Austrelaps labialis (Pygmy copperhead).